A 511-amino-acid chain; its full sequence is Histidine ammonia-lyase (511 aa).

Positions 142 to 144 (ASG) form a cross-link, 5-imidazolinone (Ala-Gly). S143 is subject to 2,3-didehydroalanine (Ser).

The protein belongs to the PAL/histidase family. In terms of processing, contains an active site 4-methylidene-imidazol-5-one (MIO), which is formed autocatalytically by cyclization and dehydration of residues Ala-Ser-Gly.

The protein localises to the cytoplasm. It catalyses the reaction L-histidine = trans-urocanate + NH4(+). The protein operates within amino-acid degradation; L-histidine degradation into L-glutamate; N-formimidoyl-L-glutamate from L-histidine: step 1/3. The chain is Histidine ammonia-lyase from Rhizobium rhizogenes (Agrobacterium rhizogenes).